Reading from the N-terminus, the 961-residue chain is G protein-coupled receptor GPR1 (961 aa).

The Extracellular portion of the chain corresponds to 1–56 (MITEGFPPNLNALKGSSLLEKRVDSLRQLNTTTVNQLLGLPGMTSTFTAPQLLQLR). A helical transmembrane segment spans residues 57-79 (IIAITASAVSLIAGCLGMFFLSK). Residues 80 to 91 (MDKRRKVFRHDL) are Cytoplasmic-facing. Residues 92–114 (IAFLIICDFLKAFILMIYPMIIL) form a helical membrane-spanning segment. The Extracellular segment spans residues 115–133 (INNSVYATPAFFNTLGWFT). Residues 134–156 (AFAIEGADMAIMIFAIHFAILIF) form a helical membrane-spanning segment. At 157–178 (KPNWKWRNKRSGNMEGGLYKKR) the chain is on the cytoplasmic side. A helical membrane pass occupies residues 179 to 198 (SYIWPITALVPAILASLAFI). The Extracellular portion of the chain corresponds to 199–250 (NYNKLNDDSDTTIILDNNNYNFPDSPRQGGYKPWSAWCYLPPKPYWYKIVLS). A helical transmembrane segment spans residues 251 to 273 (WGPRYFIIIFIFAVYLSIYIFIT). At 274-619 (SESKRIKAQI…KKRRAQIQKN (346 aa)) the chain is on the cytoplasmic side. Phosphoserine is present on Ser-373. Residues 468–568 (AMYDNKNDNS…PADNIPTLSN (101 aa)) are disordered. The span at 502 to 558 (NNNNDNDNDNNNSNNNNNNNNNNNNNNNNNNNNNNNNNNNNNNSNNIKNNVDNNNTN) shows a compositional bias: low complexity. Residues 620–642 (LRAIFIYPLSYIGIWLFPIIADA) traverse the membrane as a helical segment. At 643 to 822 (LQYNHEIKHG…AMLNNITAEE (180 aa)) the chain is on the extracellular side. Positions 783-796 (DSNDNKRTESDETK) are enriched in basic and acidic residues. The tract at residues 783 to 805 (DSNDNKRTESDETKTNSSDRSLP) is disordered. Residues 823 to 843 (VEVPLFWRIIHHIPMLGGIDL) form a helical membrane-spanning segment. At 844–961 (DELNRLLKIR…LIAFLRNGPL (118 aa)) the chain is on the cytoplasmic side. Position 903 is a phosphoserine (Ser-903).

This sequence belongs to the G-protein coupled receptor GPR1/git3 family.

Its subcellular location is the cell membrane. Functionally, seems to associate with GPA2 and act as G protein-coupled receptor that senses glucose and controls filamentous growth. It acts upstream of adenylate cyclase and is required for glucose activation of cAMP synthesis in concert with a glucose phosphorylation-dependent mechanism. The polypeptide is G protein-coupled receptor GPR1 (GPR1) (Saccharomyces cerevisiae (strain ATCC 204508 / S288c) (Baker's yeast)).